We begin with the raw amino-acid sequence, 386 residues long: Adiponectin receptor protein 2 (386 aa).

The interval 1 to 71 (MNEPTENRLG…HEYSDEAPQE (71 aa)) is disordered. Residues 1–147 (MNEPTENRLG…SIFRIHTETG (147 aa)) lie on the Cytoplasmic side of the membrane. A compositionally biased stretch (basic and acidic residues) spans 15-41 (PEPDIRLRKGHQLDGTRRGDNDSHQGD). The helical transmembrane segment at 148 to 168 (NIWTHLLGCVFFLCLGIFYMF) threads the bilayer. The Extracellular segment spans residues 169 to 181 (RPNISFVAPLQEK). The chain crosses the membrane as a helical span at residues 182-202 (VVFGLFFLGAILCLSFSWLFH). His-202 serves as a coordination point for Zn(2+). Topologically, residues 203–213 (TVYCHSEGVSR) are cytoplasmic. A helical membrane pass occupies residues 214–234 (LFSKLDYSGIALLIMGSFVPW). Topologically, residues 235–245 (LYYSFYCNPQP) are extracellular. The chain crosses the membrane as a helical span at residues 246–266 (CFIYLIVICVLGIAAIIVSQW). The Cytoplasmic portion of the chain corresponds to 267-273 (DMFATPQ). The chain crosses the membrane as a helical span at residues 274-294 (YRGVRAGVFLGLGLSGIIPTL). Over 295 to 309 (HYVISEGFLKAATIG) the chain is Extracellular. A helical transmembrane segment spans residues 310–330 (QIGWLMLMASLYITGAALYAA). The Cytoplasmic segment spans residues 331–348 (RIPERFFPGKCDIWFHSH). Zn(2+) is bound by residues His-348 and His-352. Residues 349–369 (QLFHIFVVAGAFVHFHGVSNL) traverse the membrane as a helical segment. Residues 370-386 (QEFRFMIGGGCSEEDAL) are Extracellular-facing.

This sequence belongs to the ADIPOR family. As to quaternary structure, may form homooligomers and heterooligomers with ADIPOR1. Interacts with APPL2 (via BAR domain); ADIPOQ dissociates this interaction. Ubiquitous. Highly expressed in skeletal muscle, liver and placenta. Weakly expressed in brain, heart, colon, spleen, kidney, thymus, small intestine, peripheral blood leukocytes and lung.

The protein resides in the cell membrane. In terms of biological role, receptor for ADIPOQ, an essential hormone secreted by adipocytes that regulates glucose and lipid metabolism. Required for normal body fat and glucose homeostasis. ADIPOQ-binding activates a signaling cascade that leads to increased PPARA activity, and ultimately to increased fatty acid oxidation and glucose uptake. Has intermediate affinity for globular and full-length adiponectin. Required for normal revascularization after chronic ischemia caused by severing of blood vessels. This Homo sapiens (Human) protein is Adiponectin receptor protein 2.